Consider the following 687-residue polypeptide: A-kinase anchor protein 8 (687 aa).

The interaction with MCM2 stretch occupies residues 1–195 (MEQGYGGYGA…FLRGRGQGRF (195 aa)). Residues 1-210 (MEQGYGGYGA…SSTFIRSDPF (210 aa)) form an interaction with DPY30 region. At Ser72 the chain carries Phosphoserine. Disordered regions lie at residues 105–124 (KEGG…DRDS) and 185–218 (GFLR…ASEP). Residue Arg109 is modified to Asymmetric dimethylarginine; alternate. Arg109 is subject to Omega-N-methylarginine; alternate. Gly residues predominate over residues 109–118 (RGGISSGGEG). Residues 109 to 201 (RGGISSGGEG…QGRFQDRSNS (93 aa)) form an interaction with DDX5 region. A Phosphoserine modification is found at Ser199. Omega-N-methylarginine is present on residues Arg232 and Arg276. The segment at 277–379 (SQTRIRDWPR…KQRRRDRMRD (103 aa)) is disordered. Basic and acidic residues-rich tracts occupy residues 280 to 294 (RIRD…ERFG) and 311 to 320 (PDAKLARADS). Residues 286-303 (RRRGFERFGPDNMGRKRK) carry the Bipartite nuclear localization signal motif. Residue Lys314 forms a Glycyl lysine isopeptide (Lys-Gly) (interchain with G-Cter in SUMO2) linkage. 3 positions are modified to phosphoserine: Ser320, Ser325, and Ser336. Residues 321–331 (DGDLSENDDGA) show a composition bias toward acidic residues. Residues 335 to 357 (RSGDEEFRGEDDLCDSRKQRGEK) show a composition bias toward basic and acidic residues. The tract at residues 384-447 (RIQFACSVCK…NKKIEKRRQE (64 aa)) is involved in chromatin-binding. 2 C2H2 AKAP95-type zinc fingers span residues 389–411 (CSVC…SKFH) and 478–501 (CLAC…SVDH). The segment at 522 to 565 (SVLNNKHIVKMLEKYLKGEDPFVNETADLETEGDENVGEEKEET) is involved in condensin complex recruitment. Thr552 is subject to Phosphothreonine. Positions 568–585 (EVAAEVLAEVITAAVKAV) are RII-binding. Residues 572–589 (EVLAEVITAAVKAVEGEG) form a required for interaction with MYCBP region. A disordered region spans residues 624–659 (QTCEAASETRSIEDKTRGEAAEARNEAAMPTADAGS). Over residues 633–648 (RSIEDKTRGEAAEARN) the composition is skewed to basic and acidic residues. A Phosphoserine modification is found at Ser659.

This sequence belongs to the AKAP95 family. As to quaternary structure, binds to the PKA RII-alpha regulatory subunit PRKAR2A. Interacts (via C-terminus) with FIGN. Interacts with NCAPD2, CCND3, CCNE1, MCM2, RPS6KA1, DDX5, PDE4A. Interacts with MYCBP; MYCBP is translocated to the nucleus and the interaction prevents the association of the PKA catalytic subunit leading to suppression of PKA activity. Interacts with CCND1, CASP3. Interacts with NFKB1; detetcted in the cytoplasm. Interacts with DPY30; mediating AKAP8 association with at least the MLL4/WBP7 HMT complex. Interacts with HDAC3; increased during mitosis. Interacts with GJA1; in the nucleus and in the nuclear membrane; the nuclear association increases with progress of cell cycle G1, S and G2 phase and decreases in M phase. Phosphorylated on tyrosine residues probably by SRC subfamily protein kinases; multiple phosphorylation is leading to dissociation from nuclear structures implicated in chromatin structural changes.

The protein resides in the nucleus matrix. It localises to the nucleus. Its subcellular location is the nucleolus. The protein localises to the cytoplasm. Functionally, anchoring protein that mediates the subcellular compartmentation of cAMP-dependent protein kinase (PKA type II). Acts as an anchor for a PKA-signaling complex onto mitotic chromosomes, which is required for maintenance of chromosomes in a condensed form throughout mitosis. Recruits condensin complex subunit NCAPD2 to chromosomes required for chromatin condensation; the function appears to be independent from PKA-anchoring. Specifically involved in recruitment of CAPD2 to, and condensation of maternal but not paternal chromosomes. May help to deliver cyclin D/E to CDK4 to facilitate cell cycle progression. Required for cell cycle G2/M transition and histone deacetylation during mitosis. In mitotic cells recruits HDAC3 to the vicinity of chromatin leading to deacetylation and subsequent phosphorylation at 'Ser-10' of histone H3; in this function may act redundantly with AKAP8L. Involved in nuclear retention of RPS6KA1 upon ERK activation thus inducing cell proliferation. May be involved in regulation of DNA replication by acting as scaffold for MCM2. Enhances HMT activity of the KMT2 family MLL4/WBP7 complex and is involved in transcriptional regulation. In a teratocarcinoma cell line is involved in retinoic acid-mediated induction of developmental genes implicating H3 'Lys-4' methylation. May be involved in recruitment of active CASP3 to the nucleus in apoptotic cells. May act as a carrier protein of GJA1 for its transport to the nucleus. May play a repressive role in the regulation of rDNA transcription. Preferentially binds GC-rich DNA in vitro. In cells, associates with ribosomal RNA (rRNA) chromatin, preferentially with rRNA promoter and transcribed regions. Involved in modulation of Toll-like receptor signaling. Required for the cAMP-dependent suppression of TNF-alpha in early stages of LPS-induced macrophage activation; the function probably implicates targeting of PKA to NFKB1. This chain is A-kinase anchor protein 8 (Akap8), found in Mus musculus (Mouse).